The sequence spans 171 residues: Putative MucR family transcriptional regulatory protein y4pD (171 aa).

It belongs to the ros/MucR family.

The protein is Putative MucR family transcriptional regulatory protein y4pD of Sinorhizobium fredii (strain NBRC 101917 / NGR234).